Here is a 514-residue protein sequence, read N- to C-terminus: Synaptic vesicular amine transporter (514 aa).

At 1-20 (MALSELALVRWLQESRRSRK) the chain is on the cytoplasmic side. A helical membrane pass occupies residues 21 to 41 (LILFIVFLALLLDNMLLTVVV). Residues 42–129 (PIIPSYLYSI…EDKDLLNENV (88 aa)) are Lumenal, vesicle-facing. Asn84 and Asn91 each carry an N-linked (GlcNAc...) asparagine glycan. Cys117 and Cys324 are disulfide-bonded. The helical transmembrane segment at 130 to 150 (QVGLLFASKATVQLITNPFIG) threads the bilayer. Over 151–159 (LLTNRIGYP) the chain is Cytoplasmic. The chain crosses the membrane as a helical span at residues 160–180 (IPIFAGFCIMFVSTIMFAFSS). At 181 to 189 (SYAFLLIAR) the chain is on the lumenal, vesicle side. The chain crosses the membrane as a helical span at residues 190–210 (SLQGIGSSCSSVAGMGMLASV). At 211–219 (YTDDEERGN) the chain is on the cytoplasmic side. The helical transmembrane segment at 220 to 242 (VMGIALGGLAMGVLVGPPFGSVL) threads the bilayer. Leu228 and Val232 together coordinate serotonin. Residues 243-248 (YEFVGK) lie on the Lumenal, vesicle side of the membrane. The helical transmembrane segment at 249-271 (TAPFLVLAALVLLDGAIQLFVLQ) threads the bilayer. Residues 272–291 (PSRVQPESQKGTPLTTLLKD) lie on the Cytoplasmic side of the membrane. A helical membrane pass occupies residues 292-311 (PYILIAAGSICFANMGIAML). Serotonin-binding residues include Asn305, Ile308, Glu312, Phe334, and Tyr341. Topologically, residues 312 to 328 (EPALPIWMMETMCSRKW) are lumenal, vesicle. The chain crosses the membrane as a helical span at residues 329 to 352 (QLGVAFLPASISYLIGTNIFGILA). The Cytoplasmic portion of the chain corresponds to 353-357 (HKMGR). The chain crosses the membrane as a helical span at residues 358–378 (WLCALLGMIIVGVSILCIPFA). Residues 379–389 (KNIYGLIAPNF) lie on the Lumenal, vesicle side of the membrane. The helical transmembrane segment at 390 to 410 (GVGFAIGMVDSSMMPIMGYLV) threads the bilayer. Asp399 contributes to the serotonin binding site. Over 411 to 414 (DLRH) the chain is Cytoplasmic. The helical transmembrane segment at 415–435 (VSVYGSVYAIADVAFCMGYAI) threads the bilayer. A serotonin-binding site is contributed by Tyr433. Topologically, residues 436–440 (GPSAG) are lumenal, vesicle. The chain crosses the membrane as a helical span at residues 441-462 (GAIAKAIGFPWLMTIIGIIDIL). Topologically, residues 463–514 (FAPLCFFLRSPPAKEEKMAILMDHNCPIKTKMYTQNNIQSYPIGEDEESESD) are cytoplasmic. Phosphoserine is present on residues Ser511 and Ser513.

Belongs to the major facilitator superfamily. Vesicular transporter family. Interacts with SLC6A3. Expressed in neuronal and neuroendocrine tissues. Detected in central and peripheral nervous system in particular in axonal and dendritic processes in dopaminergic cells of substantia nigra, histaminergic neuronal cell bodies of substantia nigra and tuberomammillary nucleus, in ganglion cells of sympathetic glia and in peripheral sympathetic nerve terminals in stomach and duodenum (at protein level). Highly expressed in chromaffin cells of the adrenal medulla and histamine-storing enterochromaffin-like cells of oxyntic mucosa (at protein level).

It localises to the cytoplasmic vesicle. The protein resides in the secretory vesicle. Its subcellular location is the synaptic vesicle membrane. It is found in the secretory vesicle membrane. The protein localises to the cell projection. It localises to the axon. The protein resides in the dendrite. It catalyses the reaction serotonin(in) + 2 H(+)(out) = serotonin(out) + 2 H(+)(in). It carries out the reaction dopamine(in) + 2 H(+)(out) = dopamine(out) + 2 H(+)(in). The catalysed reaction is histamine(in) + 2 H(+)(out) = histamine(out) + 2 H(+)(in). Strongly inhibited by reserpine and tetrabenazine. Also inhibited to a lesser extent by ketanserin and fenfluramine. Reserpine and ketanserin inhibit by blocking the substrate-binding pocket. Tetrabenazine traps SLC18A2/VMAT2 in an occluded conformation and its inhibition is specific to SLC18A2/VMAT2 but not SLC18A1/VMAT1. Electrogenic antiporter that exchanges one cationic monoamine with two intravesicular protons across the membrane of secretory and synaptic vesicles. Uses the electrochemical proton gradient established by the V-type proton-pump ATPase to accumulate high concentrations of monoamines inside the vesicles prior to their release via exocytosis. Transports a variety of catecholamines such as dopamine, adrenaline and noradrenaline, histamine, and indolamines such as serotonin. Regulates the transvesicular monoaminergic gradient that determines the quantal size. Mediates somatodendritic dopamine release in hippocampal neurons, likely as part of a regulated secretory pathway that integrates retrograde synaptic signals. Acts as a primary transporter for striatal dopamine loading ensuring impulse-dependent release of dopamine at the synaptic cleft. Responsible for histamine and serotonin storage and subsequent corelease from mast cell granules. This Homo sapiens (Human) protein is Synaptic vesicular amine transporter (SLC18A2).